We begin with the raw amino-acid sequence, 276 residues long: MEPQFKVKIDNDSARILKELAEKKRDEGLRVVFIGPPGSGKGTQAPLVKEDYCLCHLSTGDMLRAAIEQGTETGKQAKTIMDQGGLVPDEVMVNMIKENIQTPECKKGFILDGFPRTVPQAEKLDKMLAEDNKKIDHVLDFAIDDSLLVKRITGRLVHPSSGRSYHREFFPPKVDMIDDITGEPLIQRSDDNEEVLKKRLESFHKNTTPVLGYYQNKGILSTIDASKSAPFVSHTIKSIFLSTLHFPHNASIFKTFHQKMKMQVHSTETPLAAEIL.

38-43 (GSGKGT) lines the ATP pocket. The tract at residues 58–87 (STGDMLRAAIEQGTETGKQAKTIMDQGGLV) is NMP. Residues Thr59, Arg64, 85–87 (GLV), 113–116 (GFPR), and Gln120 each bind AMP. Residues 154-191 (GRLVHPSSGRSYHREFFPPKVDMIDDITGEPLIQRSDD) are LID. ATP-binding positions include Arg155 and 164–165 (SY). The AMP site is built by Arg188 and Arg199. Residue Lys227 coordinates ATP.

Belongs to the adenylate kinase family. AK2 subfamily. Monomer.

It is found in the cytoplasm. The protein localises to the cytosol. Its subcellular location is the mitochondrion intermembrane space. The catalysed reaction is AMP + ATP = 2 ADP. Catalyzes the reversible transfer of the terminal phosphate group between ATP and AMP. Plays an important role in cellular energy homeostasis and in adenine nucleotide metabolism. Adenylate kinase activity is critical for regulation of the phosphate utilization and the AMP de novo biosynthesis pathways. The sequence is that of Adenylate kinase (adkA) from Dictyostelium discoideum (Social amoeba).